A 179-amino-acid polypeptide reads, in one-letter code: Peptidyl-prolyl cis-trans isomerase H (179 aa).

The region spanning 16-178 (FFDISIGDTP…LQVRIAECGE (163 aa)) is the PPIase cyclophilin-type domain.

The protein belongs to the cyclophilin-type PPIase family. PPIase H subfamily.

Its subcellular location is the nucleus. It carries out the reaction [protein]-peptidylproline (omega=180) = [protein]-peptidylproline (omega=0). Functionally, PPIases accelerate the folding of proteins. It catalyzes the cis-trans isomerization of proline imidic peptide bonds in oligopeptides. The polypeptide is Peptidyl-prolyl cis-trans isomerase H (CYP3) (Cryptococcus neoformans var. neoformans serotype D (strain B-3501A) (Filobasidiella neoformans)).